The primary structure comprises 461 residues: Cysteine--tRNA ligase (461 aa).

Cysteine 29 is a binding site for Zn(2+). A 'HIGH' region motif is present at residues methionine 31 to histidine 41. Positions 210, 235, and 239 each coordinate Zn(2+). Positions lysine 267–serine 271 match the 'KMSKS' region motif. Lysine 270 is an ATP binding site.

Belongs to the class-I aminoacyl-tRNA synthetase family. Monomer. Zn(2+) is required as a cofactor.

It localises to the cytoplasm. It catalyses the reaction tRNA(Cys) + L-cysteine + ATP = L-cysteinyl-tRNA(Cys) + AMP + diphosphate. In Stutzerimonas stutzeri (strain A1501) (Pseudomonas stutzeri), this protein is Cysteine--tRNA ligase.